The primary structure comprises 508 residues: MASLLWRDTSKNIAAILEKLPADYAVDYDVPNNVEDGYITINKKNFTYHVVISGVRKYSPDVEAIVKKKSGLKSIITIEKVEKIEPLSFMEFRVGGKTLEAMGSFEVAERQVTEIKEKYGENLSEDVQKVLDDARAMGFTLPESVAEEIARRRTEWGEKAYKNILKRIGEEIGNELIDPYEAVGIIAAQSIGEPGTQMTMRTFHFAGVREMNVTLGLPRLIEIVDARRIPSTPSMTIYLRPEYETNDEVVMDVVKRLENTSISDVADIITDIGELTVTVRPDPRKTKDRLIEMEDIMNAISKIKGITVMEDSGQIIIKPQQESFKKLYLLQEQIKGLTIKGISGIKRAIARVEGKEHRWVIYTQGSNLKDVLEVDEVDPTRTYTNDIVEIANVLGIEAARNAILNEALRTLQEQGLNVDVRHLMLVADMMTFSGSVRAVGRTGISGRKSSVLARAAFEITTKHLLRAGIMGEVDKLAGVAENIIVGQPITLGTGAVDIIYKGYPKTKK.

The interval 1–123 is unknown; the sequence is MASLLWRDTS…EIKEKYGENL (123 aa). The interval 124–508 is DNA-directed RNA polymerase subunit Rpo1C; it reads SEDVQKVLDD…IYKGYPKTKK (385 aa).

Belongs to the RNA polymerase beta' chain family. Part of the RNA polymerase complex.

It localises to the cytoplasm. It catalyses the reaction RNA(n) + a ribonucleoside 5'-triphosphate = RNA(n+1) + diphosphate. Functionally, DNA-dependent RNA polymerase (RNAP) catalyzes the transcription of DNA into RNA using the four ribonucleoside triphosphates as substrates. Forms part of the jaw domain. This is DNA-directed RNA polymerase subunit Rpo1C from Thermoplasma acidophilum (strain ATCC 25905 / DSM 1728 / JCM 9062 / NBRC 15155 / AMRC-C165).